The following is a 397-amino-acid chain: Serpin B10 (397 aa).

Residues 74 to 77 (KKRK) carry the Nuclear localization signal motif.

This sequence belongs to the serpin family. Ov-serpin subfamily. As to expression, expressed in many tissues, including brain, heart, kidney, liver, lung, prostate, skin, spleen and stomach.

It is found in the nucleus. The protein localises to the cytoplasm. Its function is as follows. Protease inhibitor that may play a role in the regulation of protease activities during hematopoiesis and apoptosis induced by TNF. May regulate protease activities in the cytoplasm and in the nucleus. Inhibits plasmin. The protein is Serpin B10 (Serpinb10) of Rattus norvegicus (Rat).